We begin with the raw amino-acid sequence, 284 residues long: Bifunctional protein FolD (284 aa).

NADP(+) is bound by residues 166–168 (GAS), serine 191, and isoleucine 232.

This sequence belongs to the tetrahydrofolate dehydrogenase/cyclohydrolase family. In terms of assembly, homodimer.

The catalysed reaction is (6R)-5,10-methylene-5,6,7,8-tetrahydrofolate + NADP(+) = (6R)-5,10-methenyltetrahydrofolate + NADPH. It carries out the reaction (6R)-5,10-methenyltetrahydrofolate + H2O = (6R)-10-formyltetrahydrofolate + H(+). It functions in the pathway one-carbon metabolism; tetrahydrofolate interconversion. In terms of biological role, catalyzes the oxidation of 5,10-methylenetetrahydrofolate to 5,10-methenyltetrahydrofolate and then the hydrolysis of 5,10-methenyltetrahydrofolate to 10-formyltetrahydrofolate. The chain is Bifunctional protein FolD from Neisseria meningitidis serogroup C (strain 053442).